We begin with the raw amino-acid sequence, 119 residues long: Protein phosphatase EYA1 (119 aa).

Belongs to the HAD-like hydrolase superfamily. EYA family. The cofactor is Mg(2+).

The protein resides in the cytoplasm. It is found in the nucleus. The catalysed reaction is O-phospho-L-tyrosyl-[protein] + H2O = L-tyrosyl-[protein] + phosphate. It catalyses the reaction O-phospho-L-seryl-[protein] + H2O = L-seryl-[protein] + phosphate. The enzyme catalyses O-phospho-L-threonyl-[protein] + H2O = L-threonyl-[protein] + phosphate. In terms of biological role, functions both as protein phosphatase and as transcriptional coactivator for SIX1, and probably also for other transcription factors of this family. Tyrosine phosphatase that dephosphorylates 'Tyr-142' of histone H2AX (H2AXY142ph) and promotes efficient DNA repair via the recruitment of DNA repair complexes containing MDC1. 'Tyr-142' phosphorylation of histone H2AX plays a central role in DNA repair and acts as a mark that distinguishes between apoptotic and repair responses to genotoxic stress. Its function as histone phosphatase may contribute to its function in transcription regulation during organogenesis. Also has phosphatase activity with proteins phosphorylated on Ser and Thr residues (in vitro). Required for normal embryonic development of the skeleton, kidneys and ears. This chain is Protein phosphatase EYA1 (EYA1), found in Gallus gallus (Chicken).